The primary structure comprises 308 residues: Elongation factor Ts (308 aa).

Positions 80–83 are involved in Mg(2+) ion dislocation from EF-Tu; that stretch reads TDFV.

Belongs to the EF-Ts family.

The protein resides in the cytoplasm. Its function is as follows. Associates with the EF-Tu.GDP complex and induces the exchange of GDP to GTP. It remains bound to the aminoacyl-tRNA.EF-Tu.GTP complex up to the GTP hydrolysis stage on the ribosome. This is Elongation factor Ts from Agrobacterium fabrum (strain C58 / ATCC 33970) (Agrobacterium tumefaciens (strain C58)).